We begin with the raw amino-acid sequence, 309 residues long: Homoserine kinase (309 aa).

91-101 (PIGSGLGSSAC) is an ATP binding site.

It belongs to the GHMP kinase family. Homoserine kinase subfamily.

The protein resides in the cytoplasm. It carries out the reaction L-homoserine + ATP = O-phospho-L-homoserine + ADP + H(+). Its pathway is amino-acid biosynthesis; L-threonine biosynthesis; L-threonine from L-aspartate: step 4/5. Catalyzes the ATP-dependent phosphorylation of L-homoserine to L-homoserine phosphate. In Edwardsiella ictaluri (strain 93-146), this protein is Homoserine kinase.